A 257-amino-acid polypeptide reads, in one-letter code: Triosephosphate isomerase (257 aa).

Substrate is bound by residues asparagine 11 and lysine 13. The Electrophile role is filled by histidine 96. The active-site Proton acceptor is the glutamate 170.

This sequence belongs to the triosephosphate isomerase family. As to quaternary structure, homodimer.

The enzyme catalyses D-glyceraldehyde 3-phosphate = dihydroxyacetone phosphate. The protein operates within carbohydrate biosynthesis; gluconeogenesis. It participates in carbohydrate degradation; glycolysis; D-glyceraldehyde 3-phosphate from glycerone phosphate: step 1/1. This Giardia intestinalis (Giardia lamblia) protein is Triosephosphate isomerase.